A 143-amino-acid polypeptide reads, in one-letter code: Phosphoribosyl-AMP cyclohydrolase (143 aa).

Aspartate 86 provides a ligand contact to Mg(2+). Cysteine 87 serves as a coordination point for Zn(2+). Mg(2+) contacts are provided by aspartate 88 and aspartate 90. Zn(2+)-binding residues include cysteine 103 and cysteine 110.

The protein belongs to the PRA-CH family. Homodimer. It depends on Mg(2+) as a cofactor. Requires Zn(2+) as cofactor.

The protein resides in the cytoplasm. It carries out the reaction 1-(5-phospho-beta-D-ribosyl)-5'-AMP + H2O = 1-(5-phospho-beta-D-ribosyl)-5-[(5-phospho-beta-D-ribosylamino)methylideneamino]imidazole-4-carboxamide. It functions in the pathway amino-acid biosynthesis; L-histidine biosynthesis; L-histidine from 5-phospho-alpha-D-ribose 1-diphosphate: step 3/9. Functionally, catalyzes the hydrolysis of the adenine ring of phosphoribosyl-AMP. The sequence is that of Phosphoribosyl-AMP cyclohydrolase from Rhodospirillum rubrum (strain ATCC 11170 / ATH 1.1.1 / DSM 467 / LMG 4362 / NCIMB 8255 / S1).